Reading from the N-terminus, the 318-residue chain is Beta-ketoacyl-[acyl-carrier-protein] synthase III (318 aa).

Catalysis depends on residues cysteine 112 and histidine 245. The ACP-binding stretch occupies residues 246-250 (QANIR). Asparagine 275 is an active-site residue.

The protein belongs to the thiolase-like superfamily. FabH family. As to quaternary structure, homodimer.

Its subcellular location is the cytoplasm. The enzyme catalyses malonyl-[ACP] + acetyl-CoA + H(+) = 3-oxobutanoyl-[ACP] + CO2 + CoA. It participates in lipid metabolism; fatty acid biosynthesis. Its function is as follows. Catalyzes the condensation reaction of fatty acid synthesis by the addition to an acyl acceptor of two carbons from malonyl-ACP. Catalyzes the first condensation reaction which initiates fatty acid synthesis and may therefore play a role in governing the total rate of fatty acid production. Possesses both acetoacetyl-ACP synthase and acetyl transacylase activities. Its substrate specificity determines the biosynthesis of branched-chain and/or straight-chain of fatty acids. The sequence is that of Beta-ketoacyl-[acyl-carrier-protein] synthase III from Rickettsia conorii (strain ATCC VR-613 / Malish 7).